We begin with the raw amino-acid sequence, 417 residues long: MAEIKNYTLNFGPQHPAAHGVLRLVLELDGEVIQRADPHIGLLHRATEKLAEQKTYLQSVPYMDRLDYVSMMCNEHAYVMSIEKMLNLEVPLRAQYIRVMFDEITRILNHLMWLGAHALDVGAMGVFLYAFREREDLMDCYEAVSGARMHAAYYRPGGVYRDLPDAMPQHKASIIRNAKAINKLNENRQGSLLDFIEDFTNRFPTYVDEYETLLTDNRIWKQRLVGVGVVSPERAMAMGFTGPMLRGSGIEWDLRKKQPYEVYDLLDFDIPVGTNGDCYDRYLVRVEEMRQSNRIIKQCVEWLRNNPGSVMTDNHKVAPPSRVDMKSNMEDLIHHFKLFTEGFHVPVGEAYAAVEHPKGEFGVYLISDGANKPYRMKIRAPGFPHLQGLDEMAKGHMIADAVTIIGTQDIVFGEIDR.

The protein belongs to the complex I 49 kDa subunit family. NDH-1 is composed of 14 different subunits. Subunits NuoB, C, D, E, F, and G constitute the peripheral sector of the complex.

Its subcellular location is the cell inner membrane. The catalysed reaction is a quinone + NADH + 5 H(+)(in) = a quinol + NAD(+) + 4 H(+)(out). In terms of biological role, NDH-1 shuttles electrons from NADH, via FMN and iron-sulfur (Fe-S) centers, to quinones in the respiratory chain. The immediate electron acceptor for the enzyme in this species is believed to be ubiquinone. Couples the redox reaction to proton translocation (for every two electrons transferred, four hydrogen ions are translocated across the cytoplasmic membrane), and thus conserves the redox energy in a proton gradient. This is NADH-quinone oxidoreductase subunit D from Herminiimonas arsenicoxydans.